A 544-amino-acid chain; its full sequence is Chaperonin GroEL 2 (544 aa).

ATP-binding positions include 30–33, 87–91, G415, 480–482, and D496; these read TLGP, DGTTT, and NAA.

Belongs to the chaperonin (HSP60) family. In terms of assembly, forms a cylinder of 14 subunits composed of two heptameric rings stacked back-to-back. Interacts with the co-chaperonin GroES.

The protein localises to the cytoplasm. It catalyses the reaction ATP + H2O + a folded polypeptide = ADP + phosphate + an unfolded polypeptide.. Together with its co-chaperonin GroES, plays an essential role in assisting protein folding. The GroEL-GroES system forms a nano-cage that allows encapsulation of the non-native substrate proteins and provides a physical environment optimized to promote and accelerate protein folding. The polypeptide is Chaperonin GroEL 2 (Albidiferax ferrireducens (strain ATCC BAA-621 / DSM 15236 / T118) (Rhodoferax ferrireducens)).